Here is a 168-residue protein sequence, read N- to C-terminus: Short form salivary protein D7R2 (168 aa).

The N-terminal stretch at 1-21 is a signal peptide; sequence MFKKLLLSVGLVWCLISLGQA. 3 disulfide bridges follow: Cys-30–Cys-62, Cys-43–Cys-168, and Cys-101–Cys-120. 2 residues coordinate noradrenaline: Glu-31 and Arg-46. Glu-31 contributes to the serotonin binding site. Serotonin is bound by residues His-59, Tyr-118, Asp-135, and Glu-138. Residues Tyr-118, Asp-135, and Glu-138 each contribute to the histamine site. Positions 135 and 138 each coordinate noradrenaline.

Belongs to the PBP/GOBP family. Female saliva (at protein level). Female salivary gland. Not detected in female carcass without salivary glands. Not detected in male tissues.

Its subcellular location is the secreted. In terms of biological role, modulates blood feeding of female mosquitoes on vertebrate species by binding and sequestering different mediators involved in the host response. Binds serotonin, noradrenaline, histamine and adrenaline. Inhibits histamine-, serotonin- and noradrenaline-induced smooth muscle contraction. Exhibits vasodilating activity. In Anopheles gambiae (African malaria mosquito), this protein is Short form salivary protein D7R2.